The following is a 99-amino-acid chain: Aspartyl/glutamyl-tRNA(Asn/Gln) amidotransferase subunit C (99 aa).

Belongs to the GatC family. Heterotrimer of A, B and C subunits.

The catalysed reaction is L-glutamyl-tRNA(Gln) + L-glutamine + ATP + H2O = L-glutaminyl-tRNA(Gln) + L-glutamate + ADP + phosphate + H(+). The enzyme catalyses L-aspartyl-tRNA(Asn) + L-glutamine + ATP + H2O = L-asparaginyl-tRNA(Asn) + L-glutamate + ADP + phosphate + 2 H(+). In terms of biological role, allows the formation of correctly charged Asn-tRNA(Asn) or Gln-tRNA(Gln) through the transamidation of misacylated Asp-tRNA(Asn) or Glu-tRNA(Gln) in organisms which lack either or both of asparaginyl-tRNA or glutaminyl-tRNA synthetases. The reaction takes place in the presence of glutamine and ATP through an activated phospho-Asp-tRNA(Asn) or phospho-Glu-tRNA(Gln). The sequence is that of Aspartyl/glutamyl-tRNA(Asn/Gln) amidotransferase subunit C from Paraburkholderia phymatum (strain DSM 17167 / CIP 108236 / LMG 21445 / STM815) (Burkholderia phymatum).